The following is a 316-amino-acid chain: N-acetyl-gamma-glutamyl-phosphate reductase (316 aa).

C136 is a catalytic residue.

Belongs to the NAGSA dehydrogenase family. Type 1 subfamily.

The protein localises to the cytoplasm. The enzyme catalyses N-acetyl-L-glutamate 5-semialdehyde + phosphate + NADP(+) = N-acetyl-L-glutamyl 5-phosphate + NADPH + H(+). It participates in amino-acid biosynthesis; L-arginine biosynthesis; N(2)-acetyl-L-ornithine from L-glutamate: step 3/4. Functionally, catalyzes the NADPH-dependent reduction of N-acetyl-5-glutamyl phosphate to yield N-acetyl-L-glutamate 5-semialdehyde. This is N-acetyl-gamma-glutamyl-phosphate reductase from Xanthomonas campestris pv. campestris (strain ATCC 33913 / DSM 3586 / NCPPB 528 / LMG 568 / P 25).